The sequence spans 1377 residues: DNA-directed RNA polymerase subunit beta (1377 aa).

The protein belongs to the RNA polymerase beta chain family. As to quaternary structure, the RNAP catalytic core consists of 2 alpha, 1 beta, 1 beta' and 1 omega subunit. When a sigma factor is associated with the core the holoenzyme is formed, which can initiate transcription.

It carries out the reaction RNA(n) + a ribonucleoside 5'-triphosphate = RNA(n+1) + diphosphate. Its function is as follows. DNA-dependent RNA polymerase catalyzes the transcription of DNA into RNA using the four ribonucleoside triphosphates as substrates. The protein is DNA-directed RNA polymerase subunit beta of Brucella melitensis biotype 2 (strain ATCC 23457).